The chain runs to 624 residues: Na(+)/H(+) antiporter NhaA (624 aa).

Residues Met-1 to Asp-164 are unknown. The segment at Gly-165–Pro-624 is na(+)/H(+) antiporter NhaA. Helical transmembrane passes span Gly-199–Pro-219, Leu-240–Leu-260, Leu-279–Val-299, Gly-319–Gly-339, Val-348–Phe-368, Gly-371–Leu-391, Ile-407–Leu-427, Phe-497–Phe-517, Ile-521–Thr-541, Gly-565–Phe-585, and Ile-596–Ala-616.

The protein belongs to the NhaA Na(+)/H(+) (TC 2.A.33) antiporter family.

The protein resides in the cell inner membrane. It catalyses the reaction Na(+)(in) + 2 H(+)(out) = Na(+)(out) + 2 H(+)(in). Its function is as follows. Na(+)/H(+) antiporter that extrudes sodium in exchange for external protons. The protein is Na(+)/H(+) antiporter NhaA of Nitrosospira multiformis (strain ATCC 25196 / NCIMB 11849 / C 71).